The following is a 119-amino-acid chain: Phosphoribosyl-AMP cyclohydrolase (119 aa).

Mg(2+) is bound at residue D77. C78 provides a ligand contact to Zn(2+). Mg(2+) is bound by residues D79 and D81. Zn(2+)-binding residues include C94 and C101.

Belongs to the PRA-CH family. Homodimer. It depends on Mg(2+) as a cofactor. Zn(2+) serves as cofactor.

Its subcellular location is the cytoplasm. It catalyses the reaction 1-(5-phospho-beta-D-ribosyl)-5'-AMP + H2O = 1-(5-phospho-beta-D-ribosyl)-5-[(5-phospho-beta-D-ribosylamino)methylideneamino]imidazole-4-carboxamide. It participates in amino-acid biosynthesis; L-histidine biosynthesis; L-histidine from 5-phospho-alpha-D-ribose 1-diphosphate: step 3/9. Catalyzes the hydrolysis of the adenine ring of phosphoribosyl-AMP. The sequence is that of Phosphoribosyl-AMP cyclohydrolase from Cereibacter sphaeroides (strain ATCC 17023 / DSM 158 / JCM 6121 / CCUG 31486 / LMG 2827 / NBRC 12203 / NCIMB 8253 / ATH 2.4.1.) (Rhodobacter sphaeroides).